The primary structure comprises 843 residues: Respiratory burst oxidase homolog protein B (843 aa).

Over residues 1–10 (MREEEMESSS) the composition is skewed to acidic residues. Positions 1 to 27 (MREEEMESSSEGETNKISRCKATGSDN) are disordered. Residues 1–297 (MREEEMESSS…SYFFLENWKR (297 aa)) are Cytoplasmic-facing. EF-hand-like regions lie at residues 114–122 (AVEGKLPKS) and 148–159 (RGTTSSSITKTE). EF-hand domains lie at 171 to 206 (SFDD…SASA) and 215 to 250 (NVDE…VPSQ). 5 residues coordinate Ca(2+): aspartate 184, asparagine 186, aspartate 188, arginine 190, and glutamate 195. Phosphoserine is present on serine 268. The helical transmembrane segment at 298–318 (IWVLTLWISICITLFTWKFLQ) threads the bilayer. The Extracellular portion of the chain corresponds to 319 to 383 (YKRKTVFEVM…FDDNINFHKV (65 aa)). A Ferric oxidoreductase domain is found at 336-495 (KGSAETLKFN…LFVIVYVLLI (160 aa)). A helical transmembrane segment spans residues 384 to 404 (VAFGIAVGIGLHAISHLACDF). Residues 405–439 (PRLLHAKNVEFEPMKKFFGDERPENYGWFMKGTDG) lie on the Cytoplasmic side of the membrane. A helical transmembrane segment spans residues 440-460 (WTGVTMVVLMLVAYVLAQSWF). Over 461–482 (RRNRANLPKSLKRLTGFNAFWY) the chain is Extracellular. Residues 483–503 (SHHLFVIVYVLLIVHGYFVYL) form a helical membrane-spanning segment. Residues 504–511 (SKEWYHKT) lie on the Cytoplasmic side of the membrane. A helical transmembrane segment spans residues 512–529 (TWMYLAVPVLLYAFERLI). The Extracellular portion of the chain corresponds to 530-659 (RAFRPGAKAV…PYGAPAQDYR (130 aa)). The FAD-binding FR-type domain maps to 534–657 (PGAKAVKVLK…DGPYGAPAQD (124 aa)). A helical transmembrane segment spans residues 660–680 (NYDVLLLVGLGIGATPLISII). At 681–843 (RDVLNNIKNQ…TKFEFHKENF (163 aa)) the chain is on the cytoplasmic side.

This sequence belongs to the RBOH (TC 5.B.1.3) family. As to quaternary structure, monomer and homodimer.

The protein resides in the membrane. Its function is as follows. Calcium-dependent NADPH oxidase that generates superoxide. The sequence is that of Respiratory burst oxidase homolog protein B (RBOHB) from Arabidopsis thaliana (Mouse-ear cress).